The primary structure comprises 601 residues: MKNQNKFDPVFPLSSEQLNNLKELERTCTNIQSAWLSGYFWKIANQTSNITSFQTNESEKNDPVITIISASQTGNAKLLSKRLYEYFNKNNKISRLIDAMDYKFKKIKDEKILILIISTQGEGEPPEEALSFYKFIMSKNAPNLNNLYYSVFGLGDTSYNLFCQAGKDFDKRFKELGGNSLLDRFDADIEYEDNYNKWSQDLLQSINSKEKIYKSSVSYIDQENTLILSKNHYTKKNPAEGIILTNQKITGRNSKKDVHHIEIDISNLNIKYSPGDALGVWYKNDSNLVKNILELLSINISETITIKNDVITIFDALQNHFELTNNTKNIIKSYANFSKNKFLKDIISNDSDLENYTINTPLIKMIHDHPLKLSSQQLIGLLRPLTPRLYSISSSQEEIDNEIHITVGVVKKLISGHVYLGGASGYLSQSLKSDDIIKIFIQTNDNFRLPINKNTPIIMISSGTGIAPFRAFMQQRDNDNADGKNWLFFGNPNFTEDFLYQVEWQKYIKKGLITNMNLAWSQDQKNKIYVQDRIRENSQEIWSWIEEGAQIYVCGNASKMAKDVEKALLDIISHNAHLNLEESQEFLNNLRLNKRYKRDVY.

Residues 65–203 (ITIISASQTG…NYNKWSQDLL (139 aa)) enclose the Flavodoxin-like domain. Residues 71-76 (SQTGNA), 118-121 (STQG), and 154-163 (LGDTSYNLFC) contribute to the FMN site. One can recognise an FAD-binding FR-type domain in the interval 236-450 (KNPAEGIILT…IQTNDNFRLP (215 aa)). Residues T324, I358, 388–391 (RLYS), 406–408 (TVG), and 421–424 (GGAS) each bind FAD. NADP(+) is bound by residues 521 to 522 (SQ), 527 to 531 (KIYVQ), and D563. Y601 serves as a coordination point for FAD.

The protein belongs to the NADPH-dependent sulphite reductase flavoprotein subunit CysJ family. It in the N-terminal section; belongs to the flavodoxin family. This sequence in the C-terminal section; belongs to the flavoprotein pyridine nucleotide cytochrome reductase family. As to quaternary structure, alpha(8)-beta(8). The alpha component is a flavoprotein, the beta component is a hemoprotein. It depends on FAD as a cofactor. The cofactor is FMN.

The catalysed reaction is hydrogen sulfide + 3 NADP(+) + 3 H2O = sulfite + 3 NADPH + 4 H(+). It participates in sulfur metabolism; hydrogen sulfide biosynthesis; hydrogen sulfide from sulfite (NADPH route): step 1/1. Functionally, component of the sulfite reductase complex that catalyzes the 6-electron reduction of sulfite to sulfide. This is one of several activities required for the biosynthesis of L-cysteine from sulfate. The flavoprotein component catalyzes the electron flow from NADPH -&gt; FAD -&gt; FMN to the hemoprotein component. The protein is Sulfite reductase [NADPH] flavoprotein alpha-component of Buchnera aphidicola subsp. Acyrthosiphon pisum (strain APS) (Acyrthosiphon pisum symbiotic bacterium).